A 784-amino-acid polypeptide reads, in one-letter code: Serine/threonine-protein kinase DCLK2 (784 aa).

The interval 1–45 is disordered; that stretch reads MASTRSIELEHFEERDKRPRPGSRRGAPSSSGGSSSSGPKGNGLI. Basic and acidic residues predominate over residues 7-19; the sequence is IELEHFEERDKRP. Over residues 24 to 39 the composition is skewed to low complexity; sequence RRGAPSSSGGSSSSGP. A Phosphothreonine modification is found at threonine 61. Doublecortin domains are found at residues 72–158 and 197–280; these read KKAR…VDYT and KLVT…AQDD. Composition is skewed to low complexity over residues 300–312 and 341–364; these read AVKYSGSKSPGPS and TPSSQLSTPKSTKSSSSSPTSPGS. The segment at 300–368 is disordered; it reads AVKYSGSKSP…PTSPGSFRGL (69 aa). At serine 379 the chain carries Phosphoserine. Residues 411–668 enclose the Protein kinase domain; that stretch reads YKIGKVIGDG…AGEILSHPWV (258 aa). ATP contacts are provided by residues 417–425 and lysine 440; that span reads IGDGNFAVV. The active-site Proton acceptor is aspartate 532. Serine 664 carries the post-translational modification Phosphoserine. Residue threonine 683 is modified to Phosphothreonine. Residues 724–784 form a disordered region; that stretch reads CQDSSRPGME…RAGTWRRHRD (61 aa). The span at 741–758 shows a compositional bias: low complexity; sequence SASAEEPPVSAPAAAPAP.

This sequence belongs to the protein kinase superfamily. CAMK Ser/Thr protein kinase family. CaMK subfamily. As to quaternary structure, binds to and stabilizes microtubules. Interacts with MAPK8IP1/JIP-1, MAPK8IP2/JIP-2, MAPK9/JNK2, PPP1R9B/NEURABIN-2 and actin. Post-translationally, autophosphorylated.

The protein localises to the cytoplasm. Its subcellular location is the cytoskeleton. It carries out the reaction L-seryl-[protein] + ATP = O-phospho-L-seryl-[protein] + ADP + H(+). It catalyses the reaction L-threonyl-[protein] + ATP = O-phospho-L-threonyl-[protein] + ADP + H(+). In terms of biological role, protein kinase with a significantly reduced Ca(2+)/CAM affinity and dependence compared to other members of the CaMK family. May play a role in the down-regulation of CRE-dependent gene activation probably by phosphorylation of the CREB coactivator CRTC2/TORC2 and the resulting retention of TORC2 in the cytoplasm. This Ailuropoda melanoleuca (Giant panda) protein is Serine/threonine-protein kinase DCLK2 (DCLK2).